The following is a 294-amino-acid chain: DNA replication complex GINS protein SLD5 (294 aa).

It belongs to the GINS4/SLD5 family. As to quaternary structure, component of the GINS complex which is a heterotetramer composed of SLD5, PSF1, PSF2 and PSF3. Interacts with PSF2.

The protein resides in the nucleus. Functionally, required for DNA replication. Functions as part of the GINS complex which plays an essential role in the initiation of DNA replication by binding to DNA replication origins and facilitating the assembly of the DNA replication machinery. This chain is DNA replication complex GINS protein SLD5, found in Saccharomyces cerevisiae (strain ATCC 204508 / S288c) (Baker's yeast).